The following is a 411-amino-acid chain: Glutamate dehydrogenase (411 aa).

K102 is an active-site residue.

Belongs to the Glu/Leu/Phe/Val dehydrogenases family.

The enzyme catalyses L-glutamate + NAD(+) + H2O = 2-oxoglutarate + NH4(+) + NADH + H(+). It carries out the reaction L-glutamate + NADP(+) + H2O = 2-oxoglutarate + NH4(+) + NADPH + H(+). The protein is Glutamate dehydrogenase (GDH1) of Zea mays (Maize).